The following is a 146-amino-acid chain: Large ribosomal subunit protein uL15 (146 aa).

Residues 1-13 (MKLHELKPAEGSR) are compositionally biased toward basic and acidic residues. Residues 1 to 52 (MKLHELKPAEGSRKVRNRVGRGIGSGNGKTAGKGHKGQNARSGGGVRLGFEG) are disordered. 2 stretches are compositionally biased toward gly residues: residues 21 to 31 (RGIGSGNGKTA) and 42 to 52 (SGGGVRLGFEG).

The protein belongs to the universal ribosomal protein uL15 family. As to quaternary structure, part of the 50S ribosomal subunit.

Functionally, binds to the 23S rRNA. The sequence is that of Large ribosomal subunit protein uL15 from Bacillus cereus (strain B4264).